Here is a 434-residue protein sequence, read N- to C-terminus: E3 ubiquitin-protein ligase siah-1 (434 aa).

Positions 27 to 88 are disordered; it reads FEEDENAGPE…NGNTPSVTIP (62 aa). The segment covering 43–55 has biased composition (low complexity); it reads SSSSASSQRSSAS. Polar residues predominate over residues 74–88; that stretch reads MSNNQNGNTPSVTIP. The RING-type; degenerate zinc finger occupies 171 to 206; the sequence is CPVCLEYMLPPYMQCPSGHLVCSNCRPKLQCCPTCR. Positions 220–415 are SBD; that stretch reads IANTVRFPCK…LGINVTISRI (196 aa). The segment at 223 to 283 adopts an SIAH-type; degenerate zinc-finger fold; the sequence is TVRFPCKFSN…VMDHLKKVHK (61 aa). Positions 228, 235, 247, 251, 258, 265, 277, and 282 each coordinate Zn(2+).

It belongs to the SINA (Seven in absentia) family. Interacts with tir-1.

The catalysed reaction is S-ubiquitinyl-[E2 ubiquitin-conjugating enzyme]-L-cysteine + [acceptor protein]-L-lysine = [E2 ubiquitin-conjugating enzyme]-L-cysteine + N(6)-ubiquitinyl-[acceptor protein]-L-lysine.. The protein operates within protein modification; protein ubiquitination. In terms of biological role, E3 ubiquitin-protein ligase that mediates ubiquitination and subsequent proteasomal degradation of target proteins. E3 ubiquitin ligases accept ubiquitin from an E2 ubiquitin-conjugating enzyme in the form of a thioester and then directly transfers the ubiquitin to targeted substrates. It probably triggers the ubiquitin-mediated degradation of different substrates. In Caenorhabditis briggsae, this protein is E3 ubiquitin-protein ligase siah-1.